We begin with the raw amino-acid sequence, 555 residues long: Tau-cadinol synthase (555 aa).

(2E,6E)-farnesyl diphosphate-binding residues include arginine 270, aspartate 307, aspartate 311, arginine 448, and aspartate 451. Aspartate 307 and aspartate 311 together coordinate Mg(2+). The DDXXD motif signature appears at 307-311 (DDTYD). The Mg(2+) site is built by aspartate 451, serine 455, and glutamate 459.

This sequence belongs to the terpene synthase family. The cofactor is Mg(2+).

It carries out the reaction (2E,6E)-farnesyl diphosphate + H2O = tau-cadinol + diphosphate. The catalysed reaction is (2E,6E)-farnesyl diphosphate = (+)-gamma-cadinene + diphosphate. It functions in the pathway secondary metabolite biosynthesis; terpenoid biosynthesis. Sesquiterpene synthase that catalyzes the formation of sesquiterpenes and sesquiterpenoid alcohols. Converts farnesyl diphosphate (FPP) to tau-cadinol. Converts FPP to gamma-cadinene. Tau-cadinol is the major product. This is Tau-cadinol synthase from Lavandula angustifolia (Lavender).